A 215-amino-acid polypeptide reads, in one-letter code: Ribose-5-phosphate isomerase A (215 aa).

Substrate-binding positions include 26 to 29 (TGST), 79 to 82 (DGAD), and 92 to 95 (KGGG). Residue Glu-101 is the Proton acceptor of the active site. Residue Lys-119 coordinates substrate.

Belongs to the ribose 5-phosphate isomerase family. Homodimer.

It carries out the reaction aldehydo-D-ribose 5-phosphate = D-ribulose 5-phosphate. Its pathway is carbohydrate degradation; pentose phosphate pathway; D-ribose 5-phosphate from D-ribulose 5-phosphate (non-oxidative stage): step 1/1. In terms of biological role, catalyzes the reversible conversion of ribose-5-phosphate to ribulose 5-phosphate. This Stenotrophomonas maltophilia (strain R551-3) protein is Ribose-5-phosphate isomerase A.